The primary structure comprises 98 residues: Acylphosphatase (98 aa).

In terms of domain architecture, Acylphosphatase-like spans 10–96; it reads ARLLRIRGRV…TDGAGFDCLP (87 aa). Catalysis depends on residues arginine 25 and asparagine 43.

Belongs to the acylphosphatase family.

It carries out the reaction an acyl phosphate + H2O = a carboxylate + phosphate + H(+). This Azoarcus sp. (strain BH72) protein is Acylphosphatase (acyP).